The following is a 264-amino-acid chain: MSTAAARPGRRFTVGRSEDATHPDTIRAAISEFLATAIFVFAAEGSILSLGKLYQDMSTPGGLVAVSLAHALALAVAVAVAVNISGGHVNPAITFGALLGGRLSLIRALFYWLAQLLGAVVATLLLRLTTGGMRPPGFALASGVGDWHAVLLEATMTFGLMYAYYATVIDPKRGHVGTIAPLAVGFLLGANMLAGGPFDGAGMNPARVFGPALVGWRWRHHWVYWLGPFVGAGLAGLLYEYLVIPSADAAPHGGAHQPLAPEDY.

The next 2 membrane-spanning stretches (helical) occupy residues 28-48 (AAISEFLATAIFVFAAEGSIL) and 62-82 (GLVAVSLAHALALAVAVAVAV). The short motif at 90–92 (NPA) is the NPA 1 element. A run of 3 helical transmembrane segments spans residues 105-125 (LIRALFYWLAQLLGAVVATLL), 149-169 (AVLLEATMTFGLMYAYYATVI), and 176-196 (VGTIAPLAVGFLLGANMLAGG). Positions 204–206 (NPA) match the NPA 2 motif. Residues 224-244 (YWLGPFVGAGLAGLLYEYLVI) traverse the membrane as a helical segment.

The protein belongs to the MIP/aquaporin (TC 1.A.8) family. TIP (TC 1.A.8.10) subfamily. As to expression, expressed in leaves and at lower levels in roots.

Its subcellular location is the vacuole membrane. Aquaporins facilitate the transport of water and small neutral solutes across cell membranes. May be involved in transport from the vacuolar compartment to the cytoplasm. In Oryza sativa subsp. japonica (Rice), this protein is Probable aquaporin TIP3-1 (TIP3-1).